The chain runs to 91 residues: Probable Fe(2+)-trafficking protein (91 aa).

It belongs to the Fe(2+)-trafficking protein family.

In terms of biological role, could be a mediator in iron transactions between iron acquisition and iron-requiring processes, such as synthesis and/or repair of Fe-S clusters in biosynthetic enzymes. The polypeptide is Probable Fe(2+)-trafficking protein (Xanthomonas axonopodis pv. citri (strain 306)).